We begin with the raw amino-acid sequence, 127 residues long: Fluoride-specific ion channel FluC (127 aa).

The next 4 helical transmembrane spans lie at 2 to 22, 35 to 55, 68 to 88, and 104 to 124; these read LSSLLAVFIGGGMGSVLRWAI, LGTLAVNLLGGFIIGLAIAIF, LITTGFCGGLTTFSTFSLEVV, and LLNLAGSLVMTLLAFMLVVWI. Residues glycine 75 and threonine 78 each coordinate Na(+).

This sequence belongs to the fluoride channel Fluc/FEX (TC 1.A.43) family.

It localises to the cell inner membrane. The catalysed reaction is fluoride(in) = fluoride(out). Na(+) is not transported, but it plays an essential structural role and its presence is essential for fluoride channel function. Its function is as follows. Fluoride-specific ion channel. Important for reducing fluoride concentration in the cell, thus reducing its toxicity. The polypeptide is Fluoride-specific ion channel FluC (Serratia proteamaculans (strain 568)).